Consider the following 344-residue polypeptide: Protein BIM1 (344 aa).

N-acetylserine is present on serine 2. The 102-residue stretch at 6 to 107 (GESRTELLTW…FLQWLKKHWI (102 aa)) folds into the Calponin-homology (CH) domain. The disordered stretch occupies residues 126 to 173 (IITNNSATKPRTVSNPTTAKRSSSTGTGSAMSGGLATRHSSLGINGSR). Positions 127 to 146 (ITNNSATKPRTVSNPTTAKR) are enriched in polar residues. The segment covering 147–159 (SSSTGTGSAMSGG) has biased composition (low complexity). Serine 157 bears the Phosphoserine mark. Positions 163–173 (RHSSLGINGSR) are enriched in polar residues. One can recognise an EB1 C-terminal domain in the interval 188 to 281 (ELTKSQETIG…LYATAEGFEM (94 aa)). Residues 292–312 (NLGEHGTVPNQGGYANSNGEV) are disordered.

It belongs to the MAPRE family.

It localises to the cytoplasm. It is found in the cytoskeleton. Its function is as follows. Binds microtubules. In Saccharomyces cerevisiae (strain ATCC 204508 / S288c) (Baker's yeast), this protein is Protein BIM1 (BIM1).